Reading from the N-terminus, the 188-residue chain is Capsid protein (188 aa).

This sequence belongs to the tymoviruses capsid protein family.

It localises to the virion. Its function is as follows. Self-assembles to form a T=3 icosahedral capsid composed of 180 copies of the capsid protein. The capsid encapsulates the single-stranded RNA genome. The chain is Capsid protein from Kennedya yellow mosaic virus (strain Jervis bay) (KYMV).